We begin with the raw amino-acid sequence, 436 residues long: UDP-N-acetylglucosamine 1-carboxyvinyltransferase 1 (436 aa).

Lysine 22–asparagine 23 is a binding site for phosphoenolpyruvate. UDP-N-acetyl-alpha-D-glucosamine is bound at residue arginine 93. Catalysis depends on cysteine 117, which acts as the Proton donor. Residue cysteine 117 is modified to 2-(S-cysteinyl)pyruvic acid O-phosphothioketal. UDP-N-acetyl-alpha-D-glucosamine-binding positions include arginine 122–glutamine 126, aspartate 306, and valine 328.

The protein belongs to the EPSP synthase family. MurA subfamily.

Its subcellular location is the cytoplasm. The catalysed reaction is phosphoenolpyruvate + UDP-N-acetyl-alpha-D-glucosamine = UDP-N-acetyl-3-O-(1-carboxyvinyl)-alpha-D-glucosamine + phosphate. The protein operates within cell wall biogenesis; peptidoglycan biosynthesis. In terms of biological role, cell wall formation. Adds enolpyruvyl to UDP-N-acetylglucosamine. Essential for cell growth. This is UDP-N-acetylglucosamine 1-carboxyvinyltransferase 1 from Bacillus subtilis (strain 168).